We begin with the raw amino-acid sequence, 123 residues long: Small ribosomal subunit protein uS12 (123 aa).

Aspartate 90 is modified (3-methylthioaspartic acid).

Belongs to the universal ribosomal protein uS12 family. As to quaternary structure, part of the 30S ribosomal subunit. Contacts proteins S8 and S17. May interact with IF1 in the 30S initiation complex.

Its function is as follows. With S4 and S5 plays an important role in translational accuracy. In terms of biological role, interacts with and stabilizes bases of the 16S rRNA that are involved in tRNA selection in the A site and with the mRNA backbone. Located at the interface of the 30S and 50S subunits, it traverses the body of the 30S subunit contacting proteins on the other side and probably holding the rRNA structure together. The combined cluster of proteins S8, S12 and S17 appears to hold together the shoulder and platform of the 30S subunit. This is Small ribosomal subunit protein uS12 from Ehrlichia ruminantium (strain Gardel).